The chain runs to 544 residues: Methionine--tRNA ligase (544 aa).

Positions 10–20 (PYANGSLHLGH) match the 'HIGH' region motif. Zn(2+)-binding residues include cysteine 141, cysteine 144, cysteine 153, and cysteine 156. Residues 329–333 (KLSTS) carry the 'KMSKS' region motif. Residue threonine 332 participates in ATP binding.

It belongs to the class-I aminoacyl-tRNA synthetase family. MetG type 1 subfamily. As to quaternary structure, monomer. The cofactor is Zn(2+).

The protein localises to the cytoplasm. It catalyses the reaction tRNA(Met) + L-methionine + ATP = L-methionyl-tRNA(Met) + AMP + diphosphate. In terms of biological role, is required not only for elongation of protein synthesis but also for the initiation of all mRNA translation through initiator tRNA(fMet) aminoacylation. This Bacillus cereus (strain AH187) protein is Methionine--tRNA ligase.